Consider the following 439-residue polypeptide: Mitochondrial distribution and morphology protein 12 (439 aa).

The region spanning 1-439 (MSIDINWDTI…VYPSFWTFLV (439 aa)) is the SMP-LTD domain. Disordered regions lie at residues 65–165 (PLPD…PGAL) and 229–284 (LTLT…HEKS). Residues 69-90 (FYEDDEDYPDEEGDEAENEAED) are compositionally biased toward acidic residues. The span at 109–121 (PSRDSQSRERGRG) shows a compositional bias: basic and acidic residues. The span at 229–243 (LTLTPQSHPDPTSRP) shows a compositional bias: polar residues.

Belongs to the MDM12 family. In terms of assembly, component of the ER-mitochondria encounter structure (ERMES) or MDM complex, composed of MMM1, MDM10, mdm12 and MDM34. An MMM1 homodimer associates with one molecule of mdm12 on each side in a pairwise head-to-tail manner, and the SMP-LTD domains of MMM1 and mdm12 generate a continuous hydrophobic tunnel for phospholipid trafficking.

It is found in the mitochondrion outer membrane. The protein resides in the endoplasmic reticulum membrane. Component of the ERMES/MDM complex, which serves as a molecular tether to connect the endoplasmic reticulum (ER) and mitochondria. Components of this complex are involved in the control of mitochondrial shape and protein biogenesis, and function in nonvesicular lipid trafficking between the ER and mitochondria. mdm12 is required for the interaction of the ER-resident membrane protein MMM1 and the outer mitochondrial membrane-resident beta-barrel protein MDM10. The mdm12-MMM1 subcomplex functions in the major beta-barrel assembly pathway that is responsible for biogenesis of all mitochondrial outer membrane beta-barrel proteins, and acts in a late step after the SAM complex. The MDM10-mdm12-MMM1 subcomplex further acts in the TOM40-specific pathway after the action of the mdm12-MMM1 complex. Essential for establishing and maintaining the structure of mitochondria and maintenance of mtDNA nucleoids. This Pyrenophora tritici-repentis (strain Pt-1C-BFP) (Wheat tan spot fungus) protein is Mitochondrial distribution and morphology protein 12.